The chain runs to 93 residues: Large ribosomal subunit protein bL27 (93 aa).

The propeptide occupies 1–9 (MLRLDLQFF).

Belongs to the bacterial ribosomal protein bL27 family. The N-terminus is cleaved by ribosomal processing cysteine protease Prp.

In Bacillus licheniformis (strain ATCC 14580 / DSM 13 / JCM 2505 / CCUG 7422 / NBRC 12200 / NCIMB 9375 / NCTC 10341 / NRRL NRS-1264 / Gibson 46), this protein is Large ribosomal subunit protein bL27.